The chain runs to 362 residues: Heat-inducible transcription repressor HrcA (362 aa).

This sequence belongs to the HrcA family.

Negative regulator of class I heat shock genes (grpE-dnaK-dnaJ and groELS operons). Prevents heat-shock induction of these operons. The protein is Heat-inducible transcription repressor HrcA of Rhizobium johnstonii (strain DSM 114642 / LMG 32736 / 3841) (Rhizobium leguminosarum bv. viciae).